We begin with the raw amino-acid sequence, 118 residues long: Peptidyl-tRNA hydrolase (118 aa).

The protein belongs to the PTH2 family.

It is found in the cytoplasm. It catalyses the reaction an N-acyl-L-alpha-aminoacyl-tRNA + H2O = an N-acyl-L-amino acid + a tRNA + H(+). Functionally, the natural substrate for this enzyme may be peptidyl-tRNAs which drop off the ribosome during protein synthesis. This is Peptidyl-tRNA hydrolase from Thermococcus sibiricus (strain DSM 12597 / MM 739).